A 445-amino-acid polypeptide reads, in one-letter code: Probable D-serine dehydratase (445 aa).

Lys-111 carries the N6-(pyridoxal phosphate)lysine modification.

It belongs to the serine/threonine dehydratase family. DsdA subfamily. Requires pyridoxal 5'-phosphate as cofactor.

The enzyme catalyses D-serine = pyruvate + NH4(+). This chain is Probable D-serine dehydratase, found in Burkholderia pseudomallei (strain 1106a).